Consider the following 342-residue polypeptide: Lumican (342 aa).

Positions 1–18 (MNLGVFPLLLALIGGASS) are cleaved as a signal peptide. Sulfotyrosine occurs at positions 20, 23, and 34. In terms of domain architecture, LRRNT spans 32–70 (ALYGRSSPNCAPECNCPESYPSAMYCDELKLKSVPMVPP). LRR repeat units lie at residues 71–92 (GIKY…AFEN), 95–118 (DLQW…VFSK), 121–141 (QLKK…PLPK), 142–163 (SLVD…DGLV), 164–185 (NLTF…AALK), 189–209 (SLEY…GLPV), 210–231 (SLLT…YFKR), and 234–254 (ALQY…PGNS). An N-linked (GlcNAc...) (keratan sulfate) asparagine glycan is attached at Asn92. The N-linked (GlcNAc...) (keratan sulfate) asparagine glycan is linked to Asn131. Residue Asn164 is glycosylated (N-linked (GlcNAc...) (keratan sulfate) asparagine). The N-linked (GlcNAc...) (keratan sulfate) asparagine glycan is linked to Asn256. LRR repeat units lie at residues 259 to 280 (SLLE…NENL) and 281 to 300 (ENYY…SFCK). An intrachain disulfide couples Cys299 to Cys332. Ser308 carries the phosphoserine modification. One copy of the LRR 11 repeat lies at 309 to 330 (KIKHLRLDGNHITQTSLPPDMY).

The protein belongs to the small leucine-rich proteoglycan (SLRP) family. SLRP class II subfamily. In terms of assembly, binds to laminin. Sulfated on tyrosine residue(s). In terms of processing, contains keratan sulfate. In terms of tissue distribution, cornea and other tissues.

The protein resides in the secreted. It localises to the extracellular space. Its subcellular location is the extracellular matrix. The polypeptide is Lumican (LUM) (Bos taurus (Bovine)).